The chain runs to 185 residues: Nucleoside triphosphate pyrophosphatase (185 aa).

Asp70 serves as the catalytic Proton acceptor.

This sequence belongs to the Maf family. It depends on a divalent metal cation as a cofactor.

Its subcellular location is the cytoplasm. The enzyme catalyses a ribonucleoside 5'-triphosphate + H2O = a ribonucleoside 5'-phosphate + diphosphate + H(+). It carries out the reaction a 2'-deoxyribonucleoside 5'-triphosphate + H2O = a 2'-deoxyribonucleoside 5'-phosphate + diphosphate + H(+). Its function is as follows. Nucleoside triphosphate pyrophosphatase. May have a dual role in cell division arrest and in preventing the incorporation of modified nucleotides into cellular nucleic acids. This Nitratiruptor sp. (strain SB155-2) protein is Nucleoside triphosphate pyrophosphatase.